The sequence spans 446 residues: 3-phosphoshikimate 1-carboxyvinyltransferase (446 aa).

Residues Lys-26, Ser-27, and Arg-31 each coordinate 3-phosphoshikimate. Lys-26 provides a ligand contact to phosphoenolpyruvate. 2 residues coordinate phosphoenolpyruvate: Gly-100 and Arg-128. 3-phosphoshikimate is bound by residues Ser-171, Ser-172, Gln-173, Ser-200, Glu-315, and His-344. Gln-173 is a binding site for phosphoenolpyruvate. Residue Glu-315 is the Proton acceptor of the active site. Residues Arg-348, Arg-389, and Lys-414 each coordinate phosphoenolpyruvate.

The protein belongs to the EPSP synthase family. As to quaternary structure, monomer.

Its subcellular location is the cytoplasm. The catalysed reaction is 3-phosphoshikimate + phosphoenolpyruvate = 5-O-(1-carboxyvinyl)-3-phosphoshikimate + phosphate. The protein operates within metabolic intermediate biosynthesis; chorismate biosynthesis; chorismate from D-erythrose 4-phosphate and phosphoenolpyruvate: step 6/7. Catalyzes the transfer of the enolpyruvyl moiety of phosphoenolpyruvate (PEP) to the 5-hydroxyl of shikimate-3-phosphate (S3P) to produce enolpyruvyl shikimate-3-phosphate and inorganic phosphate. This is 3-phosphoshikimate 1-carboxyvinyltransferase from Mycolicibacterium gilvum (strain PYR-GCK) (Mycobacterium gilvum (strain PYR-GCK)).